The sequence spans 395 residues: Putative 8-amino-7-oxononanoate synthase (395 aa).

Residue Arg-23 participates in substrate binding. 110–111 contributes to the pyridoxal 5'-phosphate binding site; the sequence is GF. His-135 lines the substrate pocket. Residues Ser-182, 207-210, and 239-242 contribute to the pyridoxal 5'-phosphate site; these read DEAH and TFSK. Lys-242 carries the post-translational modification N6-(pyridoxal phosphate)lysine. Substrate is bound at residue Thr-356.

This sequence belongs to the class-II pyridoxal-phosphate-dependent aminotransferase family. BioF subfamily. In terms of assembly, homodimer. It depends on pyridoxal 5'-phosphate as a cofactor.

The catalysed reaction is 6-carboxyhexanoyl-[ACP] + L-alanine + H(+) = (8S)-8-amino-7-oxononanoate + holo-[ACP] + CO2. It functions in the pathway cofactor biosynthesis; biotin biosynthesis. Functionally, catalyzes the decarboxylative condensation of pimeloyl-[acyl-carrier protein] and L-alanine to produce 8-amino-7-oxononanoate (AON), [acyl-carrier protein], and carbon dioxide. The sequence is that of Putative 8-amino-7-oxononanoate synthase (bioF) from Bacillus thuringiensis subsp. konkukian (strain 97-27).